Consider the following 190-residue polypeptide: DNA dC-&gt;dU-editing enzyme APOBEC-3C (190 aa).

Positions 29 to 138 (DRNETWLCFT…TDYQEGLRSL (110 aa)) constitute a CMP/dCMP-type deaminase domain. Residues His-66, Cys-97, and Cys-100 each contribute to the Zn(2+) site.

It belongs to the cytidine and deoxycytidylate deaminase family. Homodimer. Interacts with TRIB3. Zn(2+) is required as a cofactor.

The protein resides in the nucleus. Its subcellular location is the cytoplasm. It catalyses the reaction a 2'-deoxycytidine in single-stranded DNA + H2O + H(+) = a 2'-deoxyuridine in single-stranded DNA + NH4(+). In terms of biological role, DNA deaminase (cytidine deaminase) which acts as an inhibitor of retrovirus replication and retrotransposon mobility via deaminase-dependent and -independent mechanisms. May also play a role in the epigenetic regulation of gene expression through the process of active DNA demethylation. This chain is DNA dC-&gt;dU-editing enzyme APOBEC-3C (APOBEC3C), found in Gorilla gorilla gorilla (Western lowland gorilla).